Here is a 154-residue protein sequence, read N- to C-terminus: Ribonuclease H (154 aa).

The RNase H type-1 domain occupies E5–D146. Positions 14, 52, 74, and 138 each coordinate Mg(2+).

This sequence belongs to the RNase H family. Monomer. Mg(2+) is required as a cofactor.

The protein localises to the cytoplasm. It catalyses the reaction Endonucleolytic cleavage to 5'-phosphomonoester.. Endonuclease that specifically degrades the RNA of RNA-DNA hybrids. This is Ribonuclease H from Coxiella burnetii (strain CbuG_Q212) (Coxiella burnetii (strain Q212)).